Here is a 195-residue protein sequence, read N- to C-terminus: MNGQLIIDRYMEELNAELANMPDVERENAIDELKGHITAFVQDRIKAGLSEEELQEAVESEFSHPKELAELMMGDGGETKRRRSLLGKSWISVLLIVTIIALPLLPSDFRHLPLAVYLMVLAGYVWKRKKLVMFAGVRKNKMRSQKEIVKISRVGAVYLLFLAVVLLLSPFLNALVVLLLIAVSCAAFFLFLNIK.

The next 4 membrane-spanning stretches (helical) occupy residues 89–106 (SWISVLLIVTIIALPLLP), 111–128 (HLPLAVYLMVLAGYVWKR), 149–168 (VKISRVGAVYLLFLAVVLLL), and 172–194 (LNALVVLLLIAVSCAAFFLFLNI).

The protein localises to the cell membrane. This is an uncharacterized protein from Bacillus subtilis (strain 168).